A 307-amino-acid polypeptide reads, in one-letter code: Membrane protein insertase YidC 2 (307 aa).

Positions 1–23 are cleaved as a signal peptide; the sequence is MKLTLNRILFSGLALSILFTLTG. The N-palmitoyl cysteine moiety is linked to residue C24. C24 carries S-diacylglycerol cysteine lipidation. 5 helical membrane-spanning segments follow: residues 58–78, 135–155, 179–199, 209–225, and 231–251; these read LGYGLAIIIVTIIVRTLILPL, LGGIGCLPLLIQMPFFSAMYF, VLTAIIAALYFFQSWLSMMAV, TMMYTMPIMMIFMSFSL, and LYWLVGGFFSIIQQLITTYLL. The tract at residues 263–307 is disordered; that stretch reads YAKTPPKAYQSTSSRKDVTPSQNMEQANLPKKIKSNRNAGKQRKR. A compositionally biased stretch (polar residues) spans 271 to 288; sequence YQSTSSRKDVTPSQNMEQ. Over residues 293–307 the composition is skewed to basic residues; it reads KKIKSNRNAGKQRKR.

It belongs to the OXA1/ALB3/YidC family. Type 2 subfamily.

Its subcellular location is the cell membrane. In terms of biological role, required for the insertion and/or proper folding and/or complex formation of integral membrane proteins into the membrane. Involved in integration of membrane proteins that insert both dependently and independently of the Sec translocase complex, as well as at least some lipoproteins. This is Membrane protein insertase YidC 2 from Streptococcus pyogenes serotype M18 (strain MGAS8232).